The sequence spans 38 residues: Potassium channel toxin alpha-KTx 2.21 (38 aa).

3 cysteine pairs are disulfide-bonded: Cys-7–Cys-29, Cys-13–Cys-34, and Cys-17–Cys-36.

In terms of tissue distribution, expressed by the venom gland.

It is found in the secreted. Its function is as follows. Inhibits human voltage-gated potassium (Kv) channels Kv1.2/KCNA2 and Kv1.3/KCNA3. Does not block human Kv1.1/KCNA1 at 100nM concentration. The chain is Potassium channel toxin alpha-KTx 2.21 from Centruroides bonito (Scorpion).